The following is a 251-amino-acid chain: MTKTEKKLRHYITKAIADYKLLDKGDKAMLCLSGGKDSFGLLKVLHGLIEDKTYDIDLHVYTLDQSQPGWDDSQLRKYLDDLGVSYEIETKNTYGVVIDKVPEGKTYCSLCSRLRRGNIYRYAKEHKMDKIILGHHRDDLIQSLLMSILYQGQIKSMPPKFVTQDGENTVIRPMVLVQERDLIEFAKEENFPIIPCNLCGSQENLKRKKVKKLIQDLALENPKVPSNILNSLSNVLPSHLMDKNLLNSLEN.

The PP-loop motif motif lies at 33-38 (SGGKDS). C108, C111, and C199 together coordinate [4Fe-4S] cluster.

It belongs to the TtcA family. Homodimer. It depends on Mg(2+) as a cofactor. [4Fe-4S] cluster is required as a cofactor.

Its subcellular location is the cytoplasm. It catalyses the reaction cytidine(32) in tRNA + S-sulfanyl-L-cysteinyl-[cysteine desulfurase] + AH2 + ATP = 2-thiocytidine(32) in tRNA + L-cysteinyl-[cysteine desulfurase] + A + AMP + diphosphate + H(+). The protein operates within tRNA modification. Catalyzes the ATP-dependent 2-thiolation of cytidine in position 32 of tRNA, to form 2-thiocytidine (s(2)C32). The sulfur atoms are provided by the cysteine/cysteine desulfurase (IscS) system. This is tRNA-cytidine(32) 2-sulfurtransferase 1 from Francisella tularensis subsp. holarctica (strain FTNF002-00 / FTA).